Here is a 31-residue protein sequence, read N- to C-terminus: Cytochrome b6-f complex subunit 6 (31 aa).

The chain crosses the membrane as a helical span at residues 4-26 (ITSYFGFLLAASTITTALFIGLS).

The protein belongs to the PetL family. As to quaternary structure, the 4 large subunits of the cytochrome b6-f complex are cytochrome b6, subunit IV (17 kDa polypeptide, PetD), cytochrome f and the Rieske protein, while the 4 small subunits are PetG, PetL, PetM and PetN. The complex functions as a dimer.

Its subcellular location is the plastid. The protein localises to the chloroplast thylakoid membrane. Component of the cytochrome b6-f complex, which mediates electron transfer between photosystem II (PSII) and photosystem I (PSI), cyclic electron flow around PSI, and state transitions. PetL is important for photoautotrophic growth as well as for electron transfer efficiency and stability of the cytochrome b6-f complex. This chain is Cytochrome b6-f complex subunit 6, found in Acorus calamus (Sweet flag).